The chain runs to 456 residues: MFDGLKKKLNRFRNDVEETAEEKAEAAADEAESDADAEAESAPADTDNAAVEPEASEPAAADPDADAVGDADAGSEADAVDAADAPADAESSSAAVEADAESESESAATPEPDSEVDAGADTGDEPSGEPTADEVEPRESLASDAAKAALTEEDEDDSSGPGRLRRAAAFATGKVVIEEEDLEDPLWELEMALLQSDVEMQVAEEILETIREKLIGETRKQVESTGQLVSEALHDALYEVISVGQFDFDQRIAEADKPVTLIFTGINGVGKTTTIAKLAKYFEKQGYSTVLANGDTYRAGANEQIREHAEALDKKLIAHEQGGDPAAVIYDGVEYAEAHDIDIVLGDTAGRLHTSNDLMAQLEKIDRVVGPDLTLFVDEAVAGQDAVERARQFNDAAAIDGAILTKADADSNGGAAISIAYVTGKPILFLGVGQGYDHIEKFDPEQMVERLLGEDE.

Over residues 1–26 (MFDGLKKKLNRFRNDVEETAEEKAEA) the composition is skewed to basic and acidic residues. The tract at residues 1–163 (MFDGLKKKLN…DEDDSSGPGR (163 aa)) is disordered. Over residues 27–39 (AADEAESDADAEA) the composition is skewed to acidic residues. Residues 40–62 (ESAPADTDNAAVEPEASEPAAAD) show a composition bias toward low complexity. A compositionally biased stretch (acidic residues) spans 63–81 (PDADAVGDADAGSEADAVD). Over residues 82–97 (AADAPADAESSSAAVE) the composition is skewed to low complexity. Over residues 112-134 (PDSEVDAGADTGDEPSGEPTADE) the composition is skewed to acidic residues. Residues 265–272 (GINGVGKT), 347–351 (DTAGR), and 405–408 (TKAD) each bind GTP.

Belongs to the GTP-binding SRP family. FtsY subfamily. Part of the signal recognition particle protein translocation system, which is composed of SRP and FtsY.

Its subcellular location is the cell membrane. The protein localises to the cytoplasm. It catalyses the reaction GTP + H2O = GDP + phosphate + H(+). Involved in targeting and insertion of nascent membrane proteins into the cytoplasmic membrane. Acts as a receptor for the complex formed by the signal recognition particle (SRP) and the ribosome-nascent chain (RNC). The sequence is that of Signal recognition particle receptor FtsY from Haloferax volcanii (strain ATCC 29605 / DSM 3757 / JCM 8879 / NBRC 14742 / NCIMB 2012 / VKM B-1768 / DS2) (Halobacterium volcanii).